Here is a 410-residue protein sequence, read N- to C-terminus: Imidazolonepropionase (410 aa).

Residues histidine 73 and histidine 75 each contribute to the Fe(3+) site. 2 residues coordinate Zn(2+): histidine 73 and histidine 75. Arginine 82, tyrosine 145, and histidine 178 together coordinate 4-imidazolone-5-propanoate. Tyrosine 145 is a binding site for N-formimidoyl-L-glutamate. Histidine 243 contributes to the Fe(3+) binding site. Zn(2+) is bound at residue histidine 243. A 4-imidazolone-5-propanoate-binding site is contributed by glutamine 246. Aspartate 318 is a Fe(3+) binding site. Residue aspartate 318 participates in Zn(2+) binding. N-formimidoyl-L-glutamate-binding residues include asparagine 320 and glycine 322. Position 323 (serine 323) interacts with 4-imidazolone-5-propanoate.

The protein belongs to the metallo-dependent hydrolases superfamily. HutI family. The cofactor is Zn(2+). Fe(3+) is required as a cofactor.

It localises to the cytoplasm. It carries out the reaction 4-imidazolone-5-propanoate + H2O = N-formimidoyl-L-glutamate. The protein operates within amino-acid degradation; L-histidine degradation into L-glutamate; N-formimidoyl-L-glutamate from L-histidine: step 3/3. Its function is as follows. Catalyzes the hydrolytic cleavage of the carbon-nitrogen bond in imidazolone-5-propanoate to yield N-formimidoyl-L-glutamate. It is the third step in the universal histidine degradation pathway. This chain is Imidazolonepropionase, found in Shewanella baltica (strain OS223).